A 318-amino-acid polypeptide reads, in one-letter code: Very-long-chain 3-oxoacyl-CoA reductase-A (318 aa).

A helical membrane pass occupies residues 15-35 (FWYLGVLAAAWWGLRAACCLL). 54–83 (GKWAVVTGATDGIGKAYAEELARRGMSIVL) is an NADP(+) binding site. Helical transmembrane passes span 187–207 (GVIL…LTVY) and 281–301 (AIMG…SMGM). Substrate is bound at residue serine 194. The active-site Proton acceptor is tyrosine 207.

Belongs to the short-chain dehydrogenases/reductases (SDR) family. 17-beta-HSD 3 subfamily.

It is found in the endoplasmic reticulum membrane. The enzyme catalyses a very-long-chain (3R)-3-hydroxyacyl-CoA + NADP(+) = a very-long-chain 3-oxoacyl-CoA + NADPH + H(+). The catalysed reaction is 17beta-estradiol + NAD(+) = estrone + NADH + H(+). It catalyses the reaction 17beta-estradiol + NADP(+) = estrone + NADPH + H(+). Its pathway is lipid metabolism; fatty acid biosynthesis. It participates in steroid biosynthesis; estrogen biosynthesis. Its function is as follows. Catalyzes the second of the four reactions of the long-chain fatty acids elongation cycle. This endoplasmic reticulum-bound enzymatic process, allows the addition of two carbons to the chain of long- and very long-chain fatty acids/VLCFAs per cycle. This enzyme has a 3-ketoacyl-CoA reductase activity, reducing 3-ketoacyl-CoA to 3-hydroxyacyl-CoA, within each cycle of fatty acid elongation. Thereby, it may participate in the production of VLCFAs of different chain lengths that are involved in multiple biological processes as precursors of membrane lipids and lipid mediators. May also catalyze the transformation of estrone (E1) into estradiol (E2) and play a role in estrogen formation. The sequence is that of Very-long-chain 3-oxoacyl-CoA reductase-A (hsd17b12-a) from Xenopus laevis (African clawed frog).